The following is a 427-amino-acid chain: Glucose-6-phosphate isomerase (427 aa).

Catalysis depends on E281, which acts as the Proton donor. Residues H302 and K417 contribute to the active site.

Belongs to the GPI family.

It is found in the cytoplasm. The catalysed reaction is alpha-D-glucose 6-phosphate = beta-D-fructose 6-phosphate. It functions in the pathway carbohydrate biosynthesis; gluconeogenesis. Its pathway is carbohydrate degradation; glycolysis; D-glyceraldehyde 3-phosphate and glycerone phosphate from D-glucose: step 2/4. Functionally, catalyzes the reversible isomerization of glucose-6-phosphate to fructose-6-phosphate. In Mycoplasmopsis pulmonis (strain UAB CTIP) (Mycoplasma pulmonis), this protein is Glucose-6-phosphate isomerase.